Reading from the N-terminus, the 114-residue chain is SNF1-related protein kinase regulatory subunit beta-3 (114 aa).

The segment at 26–50 (SYNNVYSSTEDETRDPPAVPPHLQH) is disordered. Residues 40–114 (DPPAVPPHLQ…PVQRRGSANV (75 aa)) form an association with SNF1 complex (ASC) region.

This sequence belongs to the 5'-AMP-activated protein kinase beta subunit family. As to quaternary structure, subunit of a probable heterotrimeric complex consisting of an alpha catalytic (KIN10 or KIN11) subunit, and a beta (KINB) and a gamma (KING or SNF4) non-catalytic regulatory subunits. Interacts with KIN10, KIN11 and SNF4. Interacts with FLZ1, FLZ2, FLZ3, FLZ4, FLZ5, FLZ7, FLZ8, FLZ10, FLZ13, FLZ14, FLZ15 and FLZ16. In terms of tissue distribution, expressed in rosette (at the protein level). Expressed in the whole plant and at the different developmental stage with a higher level in stems.

Regulatory subunit of the probable trimeric SNF1-related protein kinase (SnRK) complex, which may play a role in a signal transduction cascade regulating gene expression and carbohydrate metabolism in higher plants. This Arabidopsis thaliana (Mouse-ear cress) protein is SNF1-related protein kinase regulatory subunit beta-3 (KINB3).